The chain runs to 534 residues: Endoglucanase 5 (534 aa).

An N-terminal signal peptide occupies residues Met1–Ala27. Residue Asp82 is the Nucleophile of the active site. Catalysis depends on residues His432, Asp484, and Glu493. The interval Arg515–Leu534 is disordered.

This sequence belongs to the glycosyl hydrolase 9 (cellulase E) family.

The protein localises to the secreted. The enzyme catalyses Endohydrolysis of (1-&gt;4)-beta-D-glucosidic linkages in cellulose, lichenin and cereal beta-D-glucans.. The sequence is that of Endoglucanase 5 from Oryza sativa subsp. japonica (Rice).